The chain runs to 129 residues: MRHYEIVFMVHPDQSEQVAGMIERYTGSITEAGGKIHRLEDWGRRQLAYPINKLHKAHYVLMNVEADQAVIDELETAFRFNDAVLRNMIMRTKAAITEQSIMLKQKEERAPRREERSEAKPEAKSEAAE.

The interval 100-129 is disordered; that stretch reads SIMLKQKEERAPRREERSEAKPEAKSEAAE. Residues 104 to 129 are compositionally biased toward basic and acidic residues; the sequence is KQKEERAPRREERSEAKPEAKSEAAE.

The protein belongs to the bacterial ribosomal protein bS6 family.

Binds together with bS18 to 16S ribosomal RNA. The protein is Small ribosomal subunit protein bS6 of Vibrio parahaemolyticus serotype O3:K6 (strain RIMD 2210633).